Here is a 117-residue protein sequence, read N- to C-terminus: Large ribosomal subunit protein bL20 (117 aa).

Belongs to the bacterial ribosomal protein bL20 family.

Its function is as follows. Binds directly to 23S ribosomal RNA and is necessary for the in vitro assembly process of the 50S ribosomal subunit. It is not involved in the protein synthesizing functions of that subunit. In Mesomycoplasma hyopneumoniae (strain 232) (Mycoplasma hyopneumoniae), this protein is Large ribosomal subunit protein bL20.